We begin with the raw amino-acid sequence, 866 residues long: Protein mono-ADP-ribosyltransferase PARP9 (866 aa).

Serine 42 carries the post-translational modification Phosphoserine. 2 Macro domains span residues 109 to 298 (QRVF…ESIL) and 313 to 492 (ASTM…TKRS). One can recognise a PARP catalytic domain in the interval 635 to 853 (TNQQEKLDKM…YSSGPGMVSS (219 aa)).

It belongs to the ARTD/PARP family. As to quaternary structure, forms a stable complex with E3 ligase DTX3L; the interaction is required for PARP9 mediated ADP-ribosylation of ubiquitin. Interacts (via PARP catalytic domain) with DTX3L (via N-terminus). Forms a complex with STAT1 and DTX3L independently of IFNB1 or IFNG-mediated STAT1 'Tyr-701' phosphorylation. Forms a complex with STAT1, DTX3L and histone H2B H2BC9/H2BJ; the interaction is likely to induce H2BC9/H2BJ ubiquitination. Interacts (via N-terminus) with STAT1. Interacts with PARP14 in IFNG-stimulated macrophages; the interaction prevents PARP14-mediated STAT1 and STAT6 ADP-riboslylation. Interacts with PARP1 (when poly-ADP-ribosylated). In terms of processing, ADP-ribosylated by PARP14. As to expression, highly expressed in the thymus and intestine. Expressed in macrophages.

Its subcellular location is the cytoplasm. The protein resides in the cytosol. It localises to the nucleus. The catalysed reaction is [protein]-C-terminal glycine + NAD(+) = [protein]-C-terminal O-(ADP-D-ribosyl)-glycine + nicotinamide. Binding to poly(ADP-ribose) does not affect its activity. In terms of biological role, ADP-ribosyltransferase which, in association with E3 ligase DTX3L, plays a role in DNA damage repair and in immune responses including interferon-mediated antiviral defenses. Within the complex, enhances DTX3L E3 ligase activity which is further enhanced by PARP9 binding to poly(ADP-ribose). In addition, positively regulates DTXL3 protein levels. In association with DTX3L and in presence of E1 and E2 enzymes, mediates NAD(+)-dependent mono-ADP-ribosylation of ubiquitin which prevents ubiquitin conjugation to substrates such as histones. During DNA repair, PARP1 recruits PARP9/BAL1-DTX3L complex to DNA damage sites via PARP9 binding to ribosylated PARP1. Subsequent PARP1-dependent PARP9/BAL1-DTX3L-mediated ubiquitination promotes the rapid and specific recruitment of 53BP1/TP53BP1, UIMC1/RAP80, and BRCA1 to DNA damage sites. In response to DNA damage, PARP9-DTX3L complex is required for efficient non-homologous end joining (NHEJ) but the complex function is restrained by PARP9 activity. Dispensable for B-cell receptor (BCR) assembly through V(D)J recombination and class switch recombination (CSR). In macrophages, positively regulates pro-inflammatory cytokines production in response to IFNG stimulation by suppressing PARP14-mediated STAT1 ADP-ribosylation and thus promoting STAT1 phosphorylation. Also suppresses PARP14-mediated STAT6 ADP-ribosylation. The chain is Protein mono-ADP-ribosyltransferase PARP9 (Parp9) from Mus musculus (Mouse).